Here is a 249-residue protein sequence, read N- to C-terminus: 1-(5-phosphoribosyl)-5-[(5-phosphoribosylamino)methylideneamino] imidazole-4-carboxamide isomerase (249 aa).

Aspartate 8 acts as the Proton acceptor in catalysis. The active-site Proton donor is aspartate 131.

The protein belongs to the HisA/HisF family.

The protein localises to the cytoplasm. It carries out the reaction 1-(5-phospho-beta-D-ribosyl)-5-[(5-phospho-beta-D-ribosylamino)methylideneamino]imidazole-4-carboxamide = 5-[(5-phospho-1-deoxy-D-ribulos-1-ylimino)methylamino]-1-(5-phospho-beta-D-ribosyl)imidazole-4-carboxamide. Its pathway is amino-acid biosynthesis; L-histidine biosynthesis; L-histidine from 5-phospho-alpha-D-ribose 1-diphosphate: step 4/9. In Nitrosomonas europaea (strain ATCC 19718 / CIP 103999 / KCTC 2705 / NBRC 14298), this protein is 1-(5-phosphoribosyl)-5-[(5-phosphoribosylamino)methylideneamino] imidazole-4-carboxamide isomerase.